Consider the following 384-residue polypeptide: DNA polymerase IV (384 aa).

Positions 5-182 (IIHVDMDAFF…LPVTKVHGIG (178 aa)) constitute a UmuC domain. Mg(2+) is bound by residues aspartate 9, methionine 10, and aspartate 103. Residue glutamate 104 is part of the active site.

This sequence belongs to the DNA polymerase type-Y family. Monomer. Mg(2+) is required as a cofactor.

Its subcellular location is the cytoplasm. The enzyme catalyses DNA(n) + a 2'-deoxyribonucleoside 5'-triphosphate = DNA(n+1) + diphosphate. Its function is as follows. Poorly processive, error-prone DNA polymerase involved in translesion repair and untargeted mutagenesis. Copies undamaged DNA at stalled replication forks, which arise in vivo from mismatched or misaligned primer ends. These misaligned primers can be extended by PolIV. Exhibits no 3'-5' exonuclease (proofreading) activity. Involved in translesional synthesis. Primer extension fidelity in vitro is temperature-dependent. Inserts a correct base opposite templating bases at 70 degrees Celsius, but at 37 degrees Celsius in addition to correct base pairing, base transitions, transversions and frameshifts can occur. Preferably forms erroneous base pairs C:T. Bypasses 8-oxo-dG oxidative damage by incorporating dATP or dCTP opposite of the damaged DNA template site at both temperatures in vitro. The protein is DNA polymerase IV of Caldanaerobacter subterraneus subsp. tengcongensis (strain DSM 15242 / JCM 11007 / NBRC 100824 / MB4) (Thermoanaerobacter tengcongensis).